We begin with the raw amino-acid sequence, 378 residues long: Pseudouridine kinase (378 aa).

Pseudouridine-binding positions include Asp-12, Thr-26, 37–41 (GVARN), Val-38, Asn-137, and Lys-166. Positions 181 and 237 each coordinate Mg(2+). Residues Thr-237, Gly-239, Gly-242, Thr-298, Leu-306, and Gly-310 each contribute to the ATP site. Asp-311 contributes to the pseudouridine binding site.

This sequence belongs to the carbohydrate kinase PfkB family. As to quaternary structure, forms homodimers.

The protein localises to the peroxisome. The catalysed reaction is pseudouridine + ATP = psi-UMP + ADP + H(+). Functionally, catalyzes the phosphorylation of pseudouridine to pseudouridine 5'-phosphate (PsiMP). Catalyzes the first step in a pseudouridine degradation pathway. Acts together with the pseudouridine 5'-phosphate glycosidase PUMY in the peroxisome to prevent toxic pseudouridine monophosphate accumulation. In Arabidopsis thaliana (Mouse-ear cress), this protein is Pseudouridine kinase.